A 73-amino-acid polypeptide reads, in one-letter code: MLVISRKKGESLLIGEDIEITVTKIEEGAVKLSISAPRSVTILRKELYREIEEENKNSAASDISVLKKLKGKK.

The protein belongs to the CsrA/RsmA family. In terms of assembly, homodimer; the beta-strands of each monomer intercalate to form a hydrophobic core, while the alpha-helices form wings that extend away from the core.

The protein localises to the cytoplasm. Functionally, a translational regulator that binds mRNA to regulate translation initiation and/or mRNA stability. Usually binds in the 5'-UTR at or near the Shine-Dalgarno sequence preventing ribosome-binding, thus repressing translation. Its main target seems to be the major flagellin gene, while its function is anatagonized by FliW. The protein is Translational regulator CsrA of Clostridium kluyveri (strain NBRC 12016).